We begin with the raw amino-acid sequence, 270 residues long: 4-hydroxy-4-methyl-2-oxoglutarate aldolase tasA (270 aa).

His-49 acts as the Proton acceptor in catalysis. A divalent metal cation contacts are provided by Glu-156 and Asp-182. Residue Asp-182 participates in substrate binding.

It belongs to the HpcH/HpaI aldolase family. As to quaternary structure, homohexamer; trimer of dimers. Co(2+) serves as cofactor. It depends on Mn(2+) as a cofactor. Requires Zn(2+) as cofactor. Fe(2+) is required as a cofactor. The cofactor is Mg(2+).

The catalysed reaction is 4-hydroxy-4-methyl-2-oxoglutarate = 2 pyruvate. It functions in the pathway secondary metabolite biosynthesis. In terms of biological role, 4-hydroxy-4-methyl-2-oxoglutarate aldolase; part of the gene cluster that mediates the biosynthesis of the tetramic acids Sch210971 and Sch210972, potential anti-HIV fungal natural product that contain a decalin core. The PKS module of tasS together with the enoylreductase tasC catalyze the formation of the polyketide unit which is then conjugated to 4-hydroxyl-4-methyl glutamate (HMG) by the condensation domain of the tasS NRPS module. One unique structural feature of Sch210971 and Sch210972 is the tetramic acid motif proposed to be derived from the non-proteinogenic amino acid HMG, by a Dieckmann-type condensation catalyzed by the reductase domain of tasS. The aldolase tasA catalyzes the aldol condensation of 2 molecules of pyruvic acid to yield the intermediate 4-hydroxyl-4-methyl-2-oxoglutarate (HMOG), which can then be stereoselectively transaminated, may be by tasG, to form HMG. The Diels-Alderase tas3 then uses the Dieckmann product of tasS as substrate and catalyzes the Diels-Alder cycloaddition to form the decalin ring of Sch210971 and Sch210972. The chain is 4-hydroxy-4-methyl-2-oxoglutarate aldolase tasA from Hapsidospora irregularis.